A 175-amino-acid polypeptide reads, in one-letter code: ADP-ribosylation factor 6 (175 aa).

G2 carries the N-myristoyl glycine lipid modification. Residues 20 to 27 (GLDAAGKT), 63 to 67 (DVGGQ), and 122 to 125 (NKQD) each bind GTP.

The protein belongs to the small GTPase superfamily. Arf family. As to expression, expressed in the head (at protein level).

It is found in the golgi apparatus. With respect to regulation, activation is generally mediated by a guanine exchange factor (GEF), while inactivation through hydrolysis of bound GTP is catalyzed by a GTPase activating protein (GAP). May be activated by Efa6. In terms of biological role, GTP-binding protein involved in protein trafficking; may modulate vesicle budding and uncoating within the Golgi apparatus. Promotes cell movement and remodeling of the actin cytoskeleton during compound eye morphogenesis. Required for normal ethanol-induced tolerance and preference. Probably after Efa6-mediated activation, counteracts ethanol-induced sedation. The polypeptide is ADP-ribosylation factor 6 (Drosophila melanogaster (Fruit fly)).